The sequence spans 521 residues: Potassium/proton antiporter CemA (521 aa).

The next 5 helical transmembrane spans lie at 68–88 (FVFI…LLNI), 294–314 (ALAS…ISFP), 399–419 (ILHL…FISG), 446–466 (ILLL…EILI), and 481–501 (IISC…KYWI).

Belongs to the CemA family.

Its subcellular location is the plastid. The protein localises to the chloroplast inner membrane. It catalyses the reaction K(+)(in) + H(+)(out) = K(+)(out) + H(+)(in). In terms of biological role, contributes to K(+)/H(+) antiport activity by supporting proton efflux to control proton extrusion and homeostasis in chloroplasts in a light-dependent manner to modulate photosynthesis. Prevents excessive induction of non-photochemical quenching (NPQ) under continuous-light conditions. Indirectly promotes efficient inorganic carbon uptake into chloroplasts. This is Potassium/proton antiporter CemA from Huperzia lucidula (Shining clubmoss).